A 1269-amino-acid chain; its full sequence is Phospholipase D A (1269 aa).

Residues 55-64 (YTSVGSAPTT) are compositionally biased toward polar residues. A disordered region spans residues 55–121 (YTSVGSAPTT…NNNLQSPTQS (67 aa)). Composition is skewed to low complexity over residues 65–87 (NNNS…SGSS) and 95–114 (NSNK…NNNN). A coiled-coil region spans residues 131–192 (SKALHDFEEK…ELKSLDELLH (62 aa)). A compositionally biased stretch (polar residues) spans 222-232 (NSVTNNTPSSA). Disordered stretches follow at residues 222–269 (NSVT…SSST) and 300–320 (NSYP…DPNL). Residues 233–269 (TPLTLSNNNNYTSSSLATSPTTNSSSSSSSSSSSSST) show a composition bias toward low complexity. PLD phosphodiesterase domains lie at 435–462 (IYWS…CFGR) and 704–731 (EQIY…NDRS). Catalysis depends on residues His-440, Lys-442, Asp-447, His-709, Lys-711, and Asp-716. Residues 803–835 (NNNNNSNINNNINNNNNEINNNNNNNNNNNSNE) are a coiled coil. Composition is skewed to low complexity over residues 810-850 (INNN…NSNS), 859-906 (NLPP…GTTN), and 934-943 (SSPQDSPQDS). Disordered stretches follow at residues 810 to 966 (INNN…HQSP) and 983 to 1007 (SNEQ…TTTD). Over residues 987–1003 (LPPPPSSTTPPPPPPPL) the composition is skewed to pro residues. Residues 1059 to 1096 (TTAQQQQQQQQQQQQQQQQQQQQQQQQQQQQQQQQQQQ) are a coiled coil. The tract at residues 1116–1167 (IKKKRSSISPSTSSNKLLLSGNGSGDSIRVVTDSGSSPRGQPRSMSSLHDHA) is disordered. Low complexity predominate over residues 1122-1142 (SISPSTSSNKLLLSGNGSGDS). Over residues 1148-1162 (DSGSSPRGQPRSMSS) the composition is skewed to polar residues.

It belongs to the phospholipase D family.

It carries out the reaction a 1,2-diacyl-sn-glycero-3-phosphocholine + H2O = a 1,2-diacyl-sn-glycero-3-phosphate + choline + H(+). Its activity is regulated as follows. Inhibited by butan-1-ol. Plays a role in cell growth. Hydrolyzes membrane phospholipids, such as PtdCho free headgroup and PtdOH (phosphatidic acid; signaling molecule on its own). Involved in the inhibition of actin-based motility and endocytosis. Its inhibition causes complete collapse of F-actin organization. The sequence is that of Phospholipase D A (pldA) from Dictyostelium discoideum (Social amoeba).